The following is a 328-amino-acid chain: Arabinose 5-phosphate isomerase KdsD (328 aa).

Residues 42–184 (CEKMFWCKGK…AVALLKARGF (143 aa)) enclose the SIS domain. Residues 75 to 76 (GT), H82, H88, 114 to 123 (ALIPVLKRLH), 148 to 150 (KVA), T222, and D275 each bind substrate. H82 provides a ligand contact to Zn(2+). The CBS 1 domain maps to 210-268 (MHTGDEIPHVKKTASLRDALLEVTRKNLGMTVICDDNMMIEGIFTDGDLRRVFDMGVDV). Residues 277 to 328 (MTPGGIRVRPGILAVEALNLMQSRHITSVMVADGDHLLGVLHMHDLLRAGVV) form the CBS 2 domain.

It belongs to the SIS family. GutQ/KpsF subfamily. As to quaternary structure, homotetramer.

The enzyme catalyses D-arabinose 5-phosphate = D-ribulose 5-phosphate. Its pathway is carbohydrate biosynthesis; 3-deoxy-D-manno-octulosonate biosynthesis; 3-deoxy-D-manno-octulosonate from D-ribulose 5-phosphate: step 1/3. The protein operates within bacterial outer membrane biogenesis; lipopolysaccharide biosynthesis. In terms of biological role, involved in the biosynthesis of 3-deoxy-D-manno-octulosonate (KDO), a unique 8-carbon sugar component of lipopolysaccharides (LPSs). Catalyzes the reversible aldol-ketol isomerization between D-ribulose 5-phosphate (Ru5P) and D-arabinose 5-phosphate (A5P). The polypeptide is Arabinose 5-phosphate isomerase KdsD (kdsD) (Escherichia coli O157:H7).